We begin with the raw amino-acid sequence, 585 residues long: Glutathione S-transferase C-terminal domain-containing protein homolog (585 aa).

The region spanning 120-275 (LGFKGSCLLA…DKCARVLRDL (156 aa)) is the GST C-terminal domain.

This sequence belongs to the GSTCD family.

The sequence is that of Glutathione S-transferase C-terminal domain-containing protein homolog from Drosophila melanogaster (Fruit fly).